We begin with the raw amino-acid sequence, 120 residues long: UPF0102 protein TWT_455 (120 aa).

This sequence belongs to the UPF0102 family.

In Tropheryma whipplei (strain Twist) (Whipple's bacillus), this protein is UPF0102 protein TWT_455.